A 28-amino-acid chain; its full sequence is Omega-conotoxin-like CnVIIH (28 aa).

3 disulfide bridges follow: cysteine 1-cysteine 16, cysteine 8-cysteine 20, and cysteine 15-cysteine 27. Residue proline 7 is modified to 4-hydroxyproline; partial. A Methionine sulfoxide modification is found at methionine 12. At cysteine 27 the chain carries Cysteine amide.

It belongs to the conotoxin O1 superfamily. In terms of tissue distribution, expressed by the venom duct.

It localises to the secreted. Its function is as follows. Omega-conotoxins act at presynaptic membranes, they bind and block voltage-gated calcium channels (Cav). This toxin blocks N-type calcium channels (Cav2.2/CACNA1B) with high potency. Unexpectedly, it does not show any blocking activity at amphibian neuromuscular junction. In vivo, when intracerebroventricularly injected into mice causes shaking activity, and, at higher doses, causes mild tremors. When injected intramuscularly into fish, it causes paralysis, and, at higher doses, causes death. In Conus consors (Singed cone), this protein is Omega-conotoxin-like CnVIIH.